A 310-amino-acid polypeptide reads, in one-letter code: MQIYPLRLLPNKIDFDFMNFKKVSYTFSIILSLISVISIGIYKFNFGIDFVGGIVIEVRLDQTPDLPKMRQILGELGIGEVVLQNFGSERDLSIRLGSSSEANLMENIELIKASLHNNFPYKFEYRKVDFVGPQVGRQLIEAGTMAMLFSFLAIMVYIWVRFEWYFGLGILIALMHDLILALGFMSMTKLDCNLSTIAAVLTIIGYSVNDSVVIYDRIRENLRKYYKKNITEIINLSINETLSRTILTVITTLLANLALILFGGEAIRSFSVLVFFGIIAGTYSSIFISAPILTMFANKKFNNKKFNNKR.

6 helical membrane-spanning segments follow: residues 20–42, 140–160, 164–184, 194–214, 246–266, and 272–292; these read FKKVSYTFSIILSLISVISIGIY, IEAGTMAMLFSFLAIMVYIWV, WYFGLGILIALMHDLILALGF, LSTIAAVLTIIGYSVNDSVVI, ILTVITTLLANLALILFGGEA, and VLVFFGIIAGTYSSIFISAPI.

Belongs to the SecD/SecF family. SecF subfamily. As to quaternary structure, forms a complex with SecD. Part of the essential Sec protein translocation apparatus which comprises SecA, SecYEG and auxiliary proteins SecDF-YajC and YidC.

Its subcellular location is the cell inner membrane. Its function is as follows. Part of the Sec protein translocase complex. Interacts with the SecYEG preprotein conducting channel. SecDF uses the proton motive force (PMF) to complete protein translocation after the ATP-dependent function of SecA. This chain is Protein translocase subunit SecF, found in Rickettsia canadensis (strain McKiel).